A 198-amino-acid polypeptide reads, in one-letter code: MAYPGHPGAGGGYYPGGYGGAPGGPAFPGQTQDPLYGYFAAVAGQDGQIDADELQRCLTQSGIAGGYKPFNLETCRLMVSMLDRDMSGTMGFNEFKELWAVLNGWRQHFISFDTDRSGTVDPQELQKALTTMGFRLSPQAVNSIAKRYSTNGKITFDDYIACCVKLRALTDSFRRRDTAQQGVVNFPYDDFIQCVMSV.

4 consecutive EF-hand domains span residues 29 to 64 (GQTQ…SGIA), 70 to 103 (FNLE…AVLN), 100 to 135 (AVLN…MGFR), and 134 to 169 (FRLS…LRAL). Residues D83, D85, S87, T89, E94, D113, D115, S117, T119, and E124 each coordinate Ca(2+).

In terms of assembly, homodimer. Interacts with GCA, RYR2 and ANXA7. As to expression, detected in cardiac myocytes.

It localises to the cytoplasm. Its subcellular location is the sarcoplasmic reticulum membrane. In terms of biological role, calcium-binding protein that modulates excitation-contraction coupling in the heart. Contributes to calcium homeostasis in the heart sarcoplasmic reticulum. Modulates the activity of RYR2 calcium channels. The polypeptide is Sorcin (SRI) (Homo sapiens (Human)).